The primary structure comprises 360 residues: 45 kDa calcium-binding protein (360 aa).

A signal peptide spans methionine 1–alanine 29. A glycan (N-linked (GlcNAc...) asparagine) is linked at asparagine 33. 5 consecutive EF-hand domains span residues arginine 96–glutamate 131, glutamate 135–phenylalanine 170, methionine 231–asparagine 266, tryptophan 276–tyrosine 311, and asparagine 312–serine 347. Residues aspartate 109, asparagine 111, aspartate 113, glutamine 115, glutamate 120, aspartate 148, aspartate 150, aspartate 152, histidine 154, glutamate 159, aspartate 244, aspartate 246, aspartate 248, lysine 250, glutamate 255, aspartate 289, asparagine 291, aspartate 293, glutamate 300, aspartate 325, asparagine 327, aspartate 329, and glutamate 336 each contribute to the Ca(2+) site.

Belongs to the CREC family.

The protein localises to the golgi apparatus lumen. Functionally, may regulate calcium-dependent activities in the endoplasmic reticulum lumen or post-ER compartment. The sequence is that of 45 kDa calcium-binding protein (sdf4) from Xenopus laevis (African clawed frog).